A 609-amino-acid chain; its full sequence is UvrABC system protein C (609 aa).

The 79-residue stretch at 16–94 folds into the GIY-YIG domain; it reads SSAGVYRMYD…IKQYMPKYNV (79 aa). The UVR domain maps to 203-238; that stretch reads KQVISELVAKMEEAAEQQAYEQAARFRDQIMALRRV.

This sequence belongs to the UvrC family. As to quaternary structure, interacts with UvrB in an incision complex.

The protein localises to the cytoplasm. The UvrABC repair system catalyzes the recognition and processing of DNA lesions. UvrC both incises the 5' and 3' sides of the lesion. The N-terminal half is responsible for the 3' incision and the C-terminal half is responsible for the 5' incision. This is UvrABC system protein C from Shewanella oneidensis (strain ATCC 700550 / JCM 31522 / CIP 106686 / LMG 19005 / NCIMB 14063 / MR-1).